Here is a 147-residue protein sequence, read N- to C-terminus: Large ribosomal subunit protein bL9 (147 aa).

The protein belongs to the bacterial ribosomal protein bL9 family.

Binds to the 23S rRNA. This Halalkalibacterium halodurans (strain ATCC BAA-125 / DSM 18197 / FERM 7344 / JCM 9153 / C-125) (Bacillus halodurans) protein is Large ribosomal subunit protein bL9.